The sequence spans 433 residues: Serine/threonine-protein kinase DCLK1 (433 aa).

Residues 1–74 are disordered; it reads MLELIEVNGT…GEEESDEGFQ (74 aa). A phosphoserine mark is found at Ser-23, Ser-25, Ser-27, Ser-30, Ser-40, Ser-45, Ser-46, Ser-48, Ser-57, and Ser-69. Over residues 40–57 the composition is skewed to low complexity; sequence SQHGGSSTSLSSTKVCSS. A compositionally biased stretch (acidic residues) spans 59–71; that stretch reads DENDGPGEEESDE. A Protein kinase domain is found at 83–340; that stretch reads YKVGRTIGDG…AVQVLEHPWV (258 aa). Residues 89-97 and Lys-112 contribute to the ATP site; that span reads IGDGNFAVV. Catalysis depends on Asp-204, which acts as the Proton acceptor. Tyr-213 is subject to Phosphotyrosine. Over residues 388–400 the composition is skewed to basic and acidic residues; that stretch reads QVFRRRRNQDVRG. Residues 388–433 are disordered; the sequence is QVFRRRRNQDVRGRYKAQPAPPELNSESEDYSPSSSETVRSPNSPF. Ser-419, Ser-428, and Ser-431 each carry phosphoserine.

It belongs to the protein kinase superfamily. CAMK Ser/Thr protein kinase family. CaMK subfamily.

The catalysed reaction is L-seryl-[protein] + ATP = O-phospho-L-seryl-[protein] + ADP + H(+). It catalyses the reaction L-threonyl-[protein] + ATP = O-phospho-L-threonyl-[protein] + ADP + H(+). Functionally, probable kinase that may be involved in a calcium-signaling pathway controlling neuronal migration in the developing brain. May also participate in functions of the mature nervous system. The chain is Serine/threonine-protein kinase DCLK1 (Dclk1) from Rattus norvegicus (Rat).